The following is a 436-amino-acid chain: MMKRFVALSMAIFSLSFAQDVDEKIKALEEQIESLQKELQELKKAKEETEVLKEEFRKLRLEIVMPEAYKPYAGLGPAASKVYQVKKGVSIGGYGELHYINNPDNDPSSIIDLKRLILYFGYSFTENLKFNSEIEIEHAFVEGGEESGELAVEFAYLDYNFSPKFGLRGGMLLIPVGIVNELHEPPTFPTVDRPYLERNIIPTTWSENGIGIYGDTDLISYRAYIVNGMKAEEGEFKASAPLKKLRQNGGEAVSDSLAFTGRIDFKLPNNLTVGASTFISGVQNEDGKNLGNIYLFSPHLWWQYAGWDVRFVGAYATVSDAEKITLELSSATCDKSTCNVFPKRMQGFYLQVAYNILRHFDTEQELYVFGVYENYDTHASVPSGYEKPKGSEVQIFNFGISYKPHPLVALKADYVREDYKDKKDNDIYRAAITWMF.

Residues Met1–Ala18 form the signal peptide.

This is an uncharacterized protein from Aquifex aeolicus (strain VF5).